The chain runs to 725 residues: Kinesin-like protein KIN-8A (725 aa).

The segment at 1 to 32 (MPVSTRSKVMKQERNEQENTNLNLPLRNPHQG) is disordered. The Kinesin motor domain occupies 151–481 (RILVFVRLRP…LHWADRAKEI (331 aa)). Residue 243–250 (GATGAGKT) participates in ATP binding. Coiled-coil stretches lie at residues 499-541 (EGAD…AANN) and 583-617 (ESLKRTKAEEAVKELQLTVKALKMEMERMKREHGL). 2 disordered regions span residues 652 to 672 (GSLRPKEKEKELKSPSHRFAS) and 691 to 725 (SPALDRRKTRSHGLVHQEAPSKLLQPGFARPHMKH). Over residues 655-665 (RPKEKEKELKS) the composition is skewed to basic and acidic residues.

This sequence belongs to the TRAFAC class myosin-kinesin ATPase superfamily. Kinesin family. KIN-8 subfamily.

This is Kinesin-like protein KIN-8A from Arabidopsis thaliana (Mouse-ear cress).